Consider the following 342-residue polypeptide: N-acetyl-gamma-glutamyl-phosphate reductase (342 aa).

The active site involves C149.

It belongs to the NAGSA dehydrogenase family. Type 1 subfamily.

The protein resides in the cytoplasm. The catalysed reaction is N-acetyl-L-glutamate 5-semialdehyde + phosphate + NADP(+) = N-acetyl-L-glutamyl 5-phosphate + NADPH + H(+). The protein operates within amino-acid biosynthesis; L-arginine biosynthesis; N(2)-acetyl-L-ornithine from L-glutamate: step 3/4. Functionally, catalyzes the NADPH-dependent reduction of N-acetyl-5-glutamyl phosphate to yield N-acetyl-L-glutamate 5-semialdehyde. The protein is N-acetyl-gamma-glutamyl-phosphate reductase of Cereibacter sphaeroides (strain KD131 / KCTC 12085) (Rhodobacter sphaeroides).